The chain runs to 364 residues: Aminomethyltransferase (364 aa).

It belongs to the GcvT family. As to quaternary structure, the glycine cleavage system is composed of four proteins: P, T, L and H.

The enzyme catalyses N(6)-[(R)-S(8)-aminomethyldihydrolipoyl]-L-lysyl-[protein] + (6S)-5,6,7,8-tetrahydrofolate = N(6)-[(R)-dihydrolipoyl]-L-lysyl-[protein] + (6R)-5,10-methylene-5,6,7,8-tetrahydrofolate + NH4(+). Its function is as follows. The glycine cleavage system catalyzes the degradation of glycine. This Salmonella paratyphi A (strain AKU_12601) protein is Aminomethyltransferase.